The chain runs to 236 residues: Reticulon-3 (236 aa).

The span at 1 to 24 (MAEPSAATQSPSISSSSSGAEPSA) shows a compositional bias: low complexity. Residues 1 to 31 (MAEPSAATQSPSISSSSSGAEPSAPGGGGSP) are disordered. An N-acetylalanine modification is found at Ala2. The Cytoplasmic portion of the chain corresponds to 2–67 (AEPSAATQSP…KKTGFVFGTT (66 aa)). A Phosphoserine modification is found at Ser30. The 189-residue stretch at 48–236 (VHDLIFWRDV…LPGIAKKKAE (189 aa)) folds into the Reticulon domain. The segment at residues 68-91 (LIMLLSLAAFSVISVVSYLILALL) is an intramembrane region (helical). Residues 92 to 151 (SVTISFRIYKSVIQAVQKSEEGHPFKAYLDVDITLSSEAFHNYMNAAMVHINRALKLIIR) are Cytoplasmic-facing. The helical intramembrane region spans 152–172 (LFLVEDLVDSLKLAVFMWLMT). Topologically, residues 173 to 176 (YVGA) are cytoplasmic. An intramembrane region (helical) is located at residues 177–197 (VFNGITLLILAELLIFSVPIV). The interaction with FADD stretch occupies residues 191–236 (IFSVPIVYEKYKTQIDHYVGIARDQTKSIVEKIQAKLPGIAKKKAE). Over 198–236 (YEKYKTQIDHYVGIARDQTKSIVEKIQAKLPGIAKKKAE) the chain is Cytoplasmic. The interaction with BACE1 stretch occupies residues 204–206 (QID).

In terms of assembly, homodimer. Interacts with RTN4. Interacts with BACE1, BACE2, BCL2 and FADD. Interacts with ATL1 and ATL2. Interacts with TMEM33. Interacts with ZFYVE27 and with KIF5A in a ZFYVE27-dependent manner. Interacts with RIGI. Interacts with TRIM25.

The protein resides in the endoplasmic reticulum membrane. It is found in the golgi apparatus membrane. Its function is as follows. May be involved in membrane trafficking in the early secretory pathway. Inhibits BACE1 activity and amyloid precursor protein processing. May induce caspase-8 cascade and apoptosis. May favor BCL2 translocation to the mitochondria upon endoplasmic reticulum stress. Induces the formation of endoplasmic reticulum tubules. Acts also as an inflammation-resolving regulator by interacting with both TRIM25 and RIGI, subsequently impairing RIGI 'Lys-63'-linked polyubiquitination leading to IRF3 and NF-kappa-B inhibition. The sequence is that of Reticulon-3 (RTN3) from Pongo abelii (Sumatran orangutan).